The following is a 106-amino-acid chain: Large ribosomal subunit protein uL24 (106 aa).

This sequence belongs to the universal ribosomal protein uL24 family. As to quaternary structure, part of the 50S ribosomal subunit.

Its function is as follows. One of two assembly initiator proteins, it binds directly to the 5'-end of the 23S rRNA, where it nucleates assembly of the 50S subunit. One of the proteins that surrounds the polypeptide exit tunnel on the outside of the subunit. The polypeptide is Large ribosomal subunit protein uL24 (Rhodospirillum rubrum (strain ATCC 11170 / ATH 1.1.1 / DSM 467 / LMG 4362 / NCIMB 8255 / S1)).